The sequence spans 371 residues: MSRPLRPTSSSPWDCSGGVFDWDVALRKLDELNARVEDPTLWDRPSEAQAVSRERANLAAKVEAVQSIERDLKDALEYAELAEMESDEDSLNDARAQLKSLKERAGRAELEALLSGEADGNDCYVEINSGAGGTESCDWAGILLRMYTRWANAHGMTTELIEETDGDQAGIKSATLLVKGANAYGWLKTEAGVHRLVRISPYDSSARRHTSFASAWVYPVVDDNIEIEINPSDVRTDTYRASGAGGQHINKTDSAVRLTHIPTGIAVACQAGRSQHQNREEAWKMLRARLYEAELQKREAAQQALEDQKTDIGWGHQIRSYVLQPYQMVKDLRTNVETSDTQGVLDGDLDAFMAASLAQRVGHTRDGGEAS.

At Gln247 the chain carries N5-methylglutamine.

Belongs to the prokaryotic/mitochondrial release factor family. Methylated by PrmC. Methylation increases the termination efficiency of RF2.

The protein localises to the cytoplasm. Peptide chain release factor 2 directs the termination of translation in response to the peptide chain termination codons UGA and UAA. This is Peptide chain release factor 2 from Caulobacter vibrioides (strain ATCC 19089 / CIP 103742 / CB 15) (Caulobacter crescentus).